The following is a 471-amino-acid chain: MTHTSENQAGFRVKIQRFGSYLSGMIMPNIGAFIAWGIITALFIPTGWLPNETFAKLVGPMITYLLPLLIGYTGGKMIYDVRGGVVGATATMGVIVGSDIPMFLGAMIMGPLGGYLIKKFDQQIQGKVKQGFEMLVNNFSAGIIGGLLTLAAFKGVGPVVSAISKTLAAGVEKIVDLHLLPLANIFIEPGKVLFLNNAINHGILSPLGIEQAAKTGKSILFLLEPNPGPGLGILLAYWLFGKGMAKQSAPGAIIIHFLGGIHEIYFPYVLMRPILILAAIAGGVSGVLTFTIFDAGLVAVPSPGSIFALLAMTPKGNYLGVLAGVLVATAVSFFVASIFLKSAKNNEEDITKATEKMQQLKGKKSDVVAVLKNEEKVIPAKVKKIVFACDAGMGSSAMGASILRNKMQKAGLNIEVTNTAINQLPEDADIVITHQNLTDRAKEKLPKAFHISVENFLNSPKYDELIEMLKK.

Over 1 to 29 (MTHTSENQAGFRVKIQRFGSYLSGMIMPN) the chain is Cytoplasmic. In terms of domain architecture, PTS EIIC type-2 spans 18-342 (FGSYLSGMIM…FFVASIFLKS (325 aa)). Residues 30 to 51 (IGAFIAWGIITALFIPTGWLPN) form a helical membrane-spanning segment. At 52 to 55 (ETFA) the chain is on the extracellular side. The helical transmembrane segment at 56–76 (KLVGPMITYLLPLLIGYTGGK) threads the bilayer. Topologically, residues 77-139 (MIYDVRGGVV…QGFEMLVNNF (63 aa)) are cytoplasmic. The helical transmembrane segment at 140 to 161 (SAGIIGGLLTLAAFKGVGPVVS) threads the bilayer. The Extracellular segment spans residues 162-170 (AISKTLAAG). The helical transmembrane segment at 171–191 (VEKIVDLHLLPLANIFIEPGK) threads the bilayer. The Cytoplasmic segment spans residues 192–278 (VLFLNNAINH…VLMRPILILA (87 aa)). The helical transmembrane segment at 279-298 (AIAGGVSGVLTFTIFDAGLV) threads the bilayer. The Extracellular portion of the chain corresponds to 299–318 (AVPSPGSIFALLAMTPKGNY). Residues 319–340 (LGVLAGVLVATAVSFFVASIFL) traverse the membrane as a helical segment. Residues 341-471 (KSAKNNEEDI…YDELIEMLKK (131 aa)) are Cytoplasmic-facing. One can recognise a PTS EIIB type-2 domain in the interval 383 to 471 (KKIVFACDAG…YDELIEMLKK (89 aa)). The Phosphocysteine intermediate; for EIIB activity role is filled by cysteine 389. At cysteine 389 the chain carries Phosphocysteine; by EIIA.

In terms of assembly, homodimer.

Its subcellular location is the cell membrane. It catalyses the reaction D-mannitol(out) + N(pros)-phospho-L-histidyl-[protein] = D-mannitol 1-phosphate(in) + L-histidyl-[protein]. In terms of biological role, the phosphoenolpyruvate-dependent sugar phosphotransferase system (sugar PTS), a major carbohydrate active transport system, catalyzes the phosphorylation of incoming sugar substrates concomitantly with their translocation across the cell membrane. The enzyme II CmtAB PTS system is involved in D-mannitol transport. The protein is PTS system mannitol-specific EIICB component of Geobacillus stearothermophilus (Bacillus stearothermophilus).